The primary structure comprises 141 residues: Ribosome-binding factor A (141 aa).

This sequence belongs to the RbfA family. In terms of assembly, monomer. Binds 30S ribosomal subunits, but not 50S ribosomal subunits or 70S ribosomes.

The protein resides in the cytoplasm. Its function is as follows. One of several proteins that assist in the late maturation steps of the functional core of the 30S ribosomal subunit. Associates with free 30S ribosomal subunits (but not with 30S subunits that are part of 70S ribosomes or polysomes). Required for efficient processing of 16S rRNA. May interact with the 5'-terminal helix region of 16S rRNA. The polypeptide is Ribosome-binding factor A (Afipia carboxidovorans (strain ATCC 49405 / DSM 1227 / KCTC 32145 / OM5) (Oligotropha carboxidovorans)).